The primary structure comprises 306 residues: MIFQRTVKEMVKTTGVGLHSGNKVTLIIKPAPVNTGIMLVRTDLSPAVEIPAVAEQVRETTMCTALVNDDGVRISTIEHLFAALAGLGIDNAIIEVDAPEIPIMDGSASPFVFLLQSVGIEEQAAAKKYIKITKPIRVEDGDKWAELKPFKGFRVDFAIDFNHPEIARSQQHMVMDFSSSAFVKDISRARTFGFMRDIEYLRANNLALGGSMENAVVLDEYRVLNPDGLRYEDEFVKHKILDAFGDLYVAGHAIVGEFCAYKTGHALNNQLVRAMLAQQDAWEIVSFEKEADAPVSFSVPSGAVFA.

Residues H79, H238, and D242 each contribute to the Zn(2+) site. The Proton donor role is filled by H265.

This sequence belongs to the LpxC family. Requires Zn(2+) as cofactor.

The enzyme catalyses a UDP-3-O-[(3R)-3-hydroxyacyl]-N-acetyl-alpha-D-glucosamine + H2O = a UDP-3-O-[(3R)-3-hydroxyacyl]-alpha-D-glucosamine + acetate. The protein operates within glycolipid biosynthesis; lipid IV(A) biosynthesis; lipid IV(A) from (3R)-3-hydroxytetradecanoyl-[acyl-carrier-protein] and UDP-N-acetyl-alpha-D-glucosamine: step 2/6. Functionally, catalyzes the hydrolysis of UDP-3-O-myristoyl-N-acetylglucosamine to form UDP-3-O-myristoylglucosamine and acetate, the committed step in lipid A biosynthesis. This Shewanella piezotolerans (strain WP3 / JCM 13877) protein is UDP-3-O-acyl-N-acetylglucosamine deacetylase.